An 80-amino-acid chain; its full sequence is Cell division activator CedA (80 aa).

The protein belongs to the CedA family.

In terms of biological role, activates the cell division inhibited by chromosomal DNA over-replication. The polypeptide is Cell division activator CedA (Escherichia coli O1:K1 / APEC).